Consider the following 506-residue polypeptide: MEDKVLLAVAMVALIAVLSKLKSLLETKPKLNLPPGPWTLPLIGSIHHLVSSPLPYRAMRELAHKHGPLMMLWLGEVPTLVVSSPEAAQAITKTHDVTFADRHMNSTVDILTFNGNDIVFGTYGEQWRQLRKLSVLELLSVARVQSFQRIREEEVARFMRNLAASAGAGATVDLSKMISSFINDTFVRESIGSRCKHQDEYLDALHTGIRVAAELSVANLFPSSRLLQSLSTARRKAVAARDEMARILGQIIRETKEAMDWGDKASNESMISVLLRLQKEAGLPIELTDDIVMALMFDLFGAGSDTSSTTLTWCMTEMIRYPATMAKAQAEVREAFKGKTTITEDDLSRANLSYLKLVVKEALRLHCPVPLLIPRKCRETCQIMGYDIPKDTCVLVNVWAICRDSRYWEDADEFKPERFENSSLDYKGTSHEYLPFGSGRRMCPGGNLGVANMELALASLLYHFDWKLPSGQEPKDVDVWEAAGLVGRKNAGLVLHPVSRFAPVNA.

The chain crosses the membrane as a helical span at residues 5 to 25; the sequence is VLLAVAMVALIAVLSKLKSLL. Position 443 (Cys443) interacts with heme.

The protein belongs to the cytochrome P450 family. Heme is required as a cofactor.

The protein localises to the membrane. The catalysed reaction is dolabradiene + reduced [NADPH--hemoprotein reductase] + O2 = 15,16-epoxydolabrene + oxidized [NADPH--hemoprotein reductase] + H2O + H(+). It catalyses the reaction 15,16-epoxydolabrene + reduced [NADPH--hemoprotein reductase] + O2 = 3beta-hydroxy-15,16-epoxydolabrene + oxidized [NADPH--hemoprotein reductase] + H2O + H(+). Functionally, involved in the production of antifungal dolabralexin phytoalexins in response to biotic and abiotic stresses. Catalyzes the epoxidation of dolabradiene at C-16, followed by hydroxylation at C-3, to yield the epoxides 15,16-epoxydolabrene (epoxydolabrene) and 3b-hydroxy-15,16-epoxydolabrene (epoxydolabranol). This chain is Dolabradiene monooxygenase, found in Zea mays (Maize).